The following is a 170-amino-acid chain: Myosin regulatory light chain 2, skeletal muscle isoform (170 aa).

Alanine 2 bears the N,N,N-trimethylalanine mark. Phosphoserine is present on residues serine 16 and serine 17. Phosphothreonine occurs at positions 26 and 36. Residues 26–61 form the EF-hand 1 domain; sequence TQIQEFKEAFTVIDQNRDGIIDKEDLRDTFAAMGRL. Residues aspartate 39, asparagine 41, aspartate 43, and aspartate 50 each coordinate Ca(2+). Serine 76 is modified (phosphoserine). 2 EF-hand domains span residues 96-131 and 132-167; these read DPEDVITGAFKVLDPEGKGTIKKKFLEELLTTQCDR and FSQEEIKNMWAAFPPDVGGNVDYKNICYVITHGDAK. Phosphothreonine is present on threonine 102.

Myosin is a hexamer of 2 heavy chains and 4 light chains.

In terms of biological role, plays a role in muscle contraction. The polypeptide is Myosin regulatory light chain 2, skeletal muscle isoform (Bos taurus (Bovine)).